Here is a 305-residue protein sequence, read N- to C-terminus: Probable lipid kinase YegS-like (305 aa).

In terms of domain architecture, DAGKc spans 1-129; it reads MTQRRAMLIL…VDLGEVGGKL (129 aa). ATP is bound by residues Thr39, 65–71, and Thr92; that span reads GDGTLRD. The Mg(2+) site is built by Leu210, Asp213, and Leu215. Residue Glu268 is the Proton acceptor of the active site.

This sequence belongs to the diacylglycerol/lipid kinase family. YegS lipid kinase subfamily. It depends on Mg(2+) as a cofactor. Ca(2+) serves as cofactor.

The protein resides in the cytoplasm. Probably phosphorylates lipids; the in vivo substrate is unknown. The sequence is that of Probable lipid kinase YegS-like from Pseudomonas syringae pv. tomato (strain ATCC BAA-871 / DC3000).